The primary structure comprises 472 residues: Endoplasmic reticulum oxidoreductin-2 (472 aa).

The signal sequence occupies residues 1 to 37 (MAETDVGSVKGKEKGSGKRWILLIGAIAAVLLAVVVA). N-linked (GlcNAc...) asparagine glycosylation occurs at asparagine 44. 6 disulfides stabilise this stretch: cysteine 55–cysteine 74, cysteine 57–cysteine 72, cysteine 111–cysteine 371, cysteine 120–cysteine 125, cysteine 221–cysteine 230, and cysteine 374–cysteine 377. 3 residues coordinate FAD: arginine 200, threonine 202, and tryptophan 213. FAD-binding residues include serine 241 and histidine 244. A glycan (N-linked (GlcNAc...) asparagine) is linked at asparagine 267. FAD is bound by residues arginine 274 and arginine 281. A glycan (N-linked (GlcNAc...) asparagine) is linked at asparagine 364.

Belongs to the EROs family. In terms of assembly, may function both as a monomer and a homodimer. It depends on FAD as a cofactor. In terms of processing, N-glycosylated.

It is found in the endoplasmic reticulum membrane. Functionally, essential oxidoreductase that oxidizes proteins in the endoplasmic reticulum to produce disulfide bonds. Acts by oxidizing directly PDI isomerase through a direct disulfide exchange. Does not act as a direct oxidant of folding substrate, but relies on PDI to transfer oxidizing equivalent. Does not oxidize all PDI related proteins, suggesting that it can discriminate between PDI and related proteins. Its reoxidation probably involves electron transfer to molecular oxygen via FAD. Acts independently of glutathione. May be responsible for a significant proportion of reactive oxygen species (ROS) in the cell, thereby being a source of oxidative stress. The polypeptide is Endoplasmic reticulum oxidoreductin-2 (AERO2) (Arabidopsis thaliana (Mouse-ear cress)).